The sequence spans 435 residues: MNRRRRYTGSNPSLRRVLYRAHLGVALVAVFTAGLAVTLVGLLTLRAYADPNQQLIARSISYTVEAAVVFGDAQAAEESLALIASSEEVSSAIVYDRQGQPLASWHRESTGPLHLLEQQLAHWLLSAPTEQPILHDGQKIGSVEVKGSGGSLLRFLLTGFAGMVLCLLLTALGAFYLSRRLVRGIVGPLDQLAKVAHTVRRERDFEKRVPEAGIAELSQLGEDFNALLDELESWQARLQDENASLAHQAHHDSLTSLPNRAFFEGRLSRALRDASEHREQLAVLFIDSDRFKEINDRLGHAAGDTVLVNIAMRIRGQLRESDLVARLGGDEFAVLLAPLASGADALRIADNIIASMQAPIRLSDGSTVSTSLTIGIALYPEHADTPAALLHDADMAMYIAKRQARGSRRLAELNDPRILQEEKEIDSATPEAPPK.

Residues 1–22 (MNRRRRYTGSNPSLRRVLYRAH) are Cytoplasmic-facing. The chain crosses the membrane as a helical span at residues 23 to 43 (LGVALVAVFTAGLAVTLVGLL). The Periplasmic portion of the chain corresponds to 44–154 (TLRAYADPNQ…VKGSGGSLLR (111 aa)). Residues 155-175 (FLLTGFAGMVLCLLLTALGAF) form a helical membrane-spanning segment. Topologically, residues 176–435 (YLSRRLVRGI…DSATPEAPPK (260 aa)) are cytoplasmic. Residues 183–236 (RGIVGPLDQLAKVAHTVRRERDFEKRVPEAGIAELSQLGEDFNALLDELESWQA) enclose the HAMP domain. Residues 279–415 (EQLAVLFIDS…GSRRLAELND (137 aa)) form the GGDEF domain. Positions 288 and 330 each coordinate Mg(2+). The Proton acceptor role is filled by Asp-330. Over residues 414-426 (NDPRILQEEKEID) the composition is skewed to basic and acidic residues. The disordered stretch occupies residues 414–435 (NDPRILQEEKEIDSATPEAPPK).

Mg(2+) serves as cofactor. Phosphorylated at both Tyr residues and Ser/Thr residues. Dephosphorylated and inactivated by TpbA.

The protein resides in the cell inner membrane. It carries out the reaction 2 GTP = 3',3'-c-di-GMP + 2 diphosphate. It participates in purine metabolism; 3',5'-cyclic di-GMP biosynthesis. Activity is tightly controlled by YfiR, a small periplasmic protein, and the OmpA/Pal-like outer-membrane lipoprotein YfiB. Diguanylate cyclase activity is inhibited by the specific interaction of YfiR with the TpbB periplasmic domain and is activated by YfiB, which releases the YfiR-mediated repression through sequestration of YfiR to the outer membrane. Activity is also controlled by dephosphorylation of the periplasmic domain by the tyrosine phosphatase TpbA. Functionally, catalyzes the synthesis of cyclic-di-GMP (c-di-GMP) via the condensation of 2 GTP molecules. Important for the regulation of biofilm maintenance when exposed to peroxide. Its function is as follows. Part of the YfiB-TpbB-YfiR (or yfiBNR) system, encoding a tripartite signaling module that modulates intracellular c-di-GMP levels. The system is a key regulator of the small colony variant (SCV) phenotype, and plays an important role in biofilm formation and in vivo persistence. The c-di-GMP produced by TpbB/YfiN stimulates the production of the Pel and Psl exopolysaccharides, which promotes surface attachment, generates an SCV phenotype and confers resistance against phagocytosis. The sequence is that of Diguanylate cyclase TpbB from Pseudomonas aeruginosa (strain UCBPP-PA14).